Consider the following 490-residue polypeptide: GTPase Der (490 aa).

EngA-type G domains follow at residues 3 to 166 (PVVA…MEDL) and 203 to 376 (IKLA…DSST). GTP-binding positions include 9-16 (GRPNVGKS), 56-60 (DTGGI), 118-121 (NKID), 209-216 (GRPNVGKS), 256-260 (DTAGV), and 321-324 (NKWD). The 85-residue stretch at 377 to 461 (RRVGTSMLTR…PIRIQFKEGE (85 aa)) folds into the KH-like domain.

Belongs to the TRAFAC class TrmE-Era-EngA-EngB-Septin-like GTPase superfamily. EngA (Der) GTPase family. In terms of assembly, associates with the 50S ribosomal subunit.

In terms of biological role, GTPase that plays an essential role in the late steps of ribosome biogenesis. This chain is GTPase Der, found in Shigella boydii serotype 18 (strain CDC 3083-94 / BS512).